We begin with the raw amino-acid sequence, 476 residues long: Glutamate--tRNA ligase (476 aa).

Positions 8–18 match the 'HIGH' region motif; it reads PSPTGTLHIGT. The 'KMSKS' region signature appears at 247-251; that stretch reads KLSKR. Residue K250 participates in ATP binding.

This sequence belongs to the class-I aminoacyl-tRNA synthetase family. Glutamate--tRNA ligase type 1 subfamily. In terms of assembly, monomer.

It is found in the cytoplasm. The enzyme catalyses tRNA(Glu) + L-glutamate + ATP = L-glutamyl-tRNA(Glu) + AMP + diphosphate. Functionally, catalyzes the attachment of glutamate to tRNA(Glu) in a two-step reaction: glutamate is first activated by ATP to form Glu-AMP and then transferred to the acceptor end of tRNA(Glu). The protein is Glutamate--tRNA ligase of Synechococcus sp. (strain WH7803).